Here is a 714-residue protein sequence, read N- to C-terminus: Calpain-1 catalytic subunit (714 aa).

Ser-2 bears the N-acetylserine mark. A Calpain catalytic domain is found at 55–354 (LFRDEAFPPV…FTRLEICNLT (300 aa)). Gln-109 and Asp-114 together coordinate Ca(2+). Catalysis depends on residues Cys-115, His-272, and Asn-296. Ca(2+)-binding residues include Asn-316, Asp-318, and Asp-323. The residue at position 354 (Thr-354) is a Phosphothreonine. Residues 355 to 526 (PDALKSRTIR…KSAGTVELDD (172 aa)) are domain III. Residues 527-542 (QIQANLPDEQVLSEEE) are linker. 4 consecutive EF-hand domains span residues 541–576 (EEIDENFKALFRQLAGEDMEISVKELRTILNRIISK), 585–618 (FSLESCRSMVNLMDRDGNGKLGLVEFNILWNRIR), 615–650 (NRIRNYLSIFRKFDLDKSGSMSAYEMRMAIESAGFK), and 680–714 (VRLETMFRFFKTLDTDLDGVVTFDLFKWLQLTMFA). Residues 543-713 (IDENFKALFR…LFKWLQLTMF (171 aa)) form a domain IV region. Ca(2+)-binding residues include Asp-598, Asp-600, Asn-602, Lys-604, Glu-609, Asp-628, Asp-630, Ser-632, Ser-634, and Glu-639.

The protein belongs to the peptidase C2 family. As to quaternary structure, forms a heterodimer with a small (regulatory) subunit CAPNS1. The cofactor is Ca(2+). Undergoes calcium-induced successive autoproteolytic cleavages that generate a membrane-bound 78 kDa active form and an intracellular 75 kDa active form. Calpastatin reduces with high efficiency the transition from 78 kDa to 75 kDa calpain forms. As to expression, ubiquitous.

The protein resides in the cytoplasm. It is found in the cell membrane. It catalyses the reaction Broad endopeptidase specificity.. Activated by micromolar concentrations of calcium and inhibited by calpastatin. Calcium-regulated non-lysosomal thiol-protease which catalyzes limited proteolysis of substrates involved in cytoskeletal remodeling and signal transduction. Proteolytically cleaves CTBP1 at 'Asn-375', 'Gly-387' and 'His-409'. Cleaves and activates caspase-7 (CASP7). This Homo sapiens (Human) protein is Calpain-1 catalytic subunit.